A 321-amino-acid chain; its full sequence is Transmembrane protein 255A (321 aa).

Transmembrane regions (helical) follow at residues 29–49 (VFVT…GMAA), 56–76 (VTVG…LGII), 88–108 (LVAS…CAIV), and 200–220 (TILN…LGGF). A compositionally biased stretch (polar residues) spans 279–297 (STPSGLSDDPNGQASSFMW). Residues 279-300 (STPSGLSDDPNGQASSFMWPSN) are disordered.

This sequence belongs to the TMEM255 family.

The protein resides in the membrane. This chain is Transmembrane protein 255A (tmem255a), found in Xenopus laevis (African clawed frog).